A 254-amino-acid chain; its full sequence is O-antigen biosynthesis glycosyltransferase WbnJ (254 aa).

Belongs to the glycosyltransferase 2 family.

It carries out the reaction an N-acetyl-alpha-D-galactosaminyl derivative + UDP-alpha-D-galactose = a beta-D-galactosyl-(1-&gt;3)-N-acetyl-alpha-D-galactosaminyl derivative + UDP + H(+). The catalysed reaction is alpha-D-GalNAc-(1-&gt;3)-alpha-D-GalNAc-di-trans,octa-cis-undecaprenyl diphosphate + UDP-alpha-D-galactose = beta-D-Gal-(1-&gt;3)-alpha-D-GalNAc-(1-&gt;3)-alpha-D-GalNAc-di-trans,octa-cis-undecaprenyl diphosphate + UDP + H(+). Its pathway is bacterial outer membrane biogenesis; LPS O-antigen biosynthesis. Involved in the assembly of the O-repeating unit during O-antigen biosynthesis. The chain is O-antigen biosynthesis glycosyltransferase WbnJ from Escherichia coli.